Reading from the N-terminus, the 106-residue chain is Immunity protein CdiI (106 aa).

Forms a contact-dependent growth inhibition complex of CdiA-CT-NC101, CdiI-NC101 and EF-Tu; the complex is a dimer of heterotrimers.

Immunity protein component of a toxin-immunity protein module, which functions as a cellular contact-dependent growth inhibition (CDI) system. CDI modules allow bacteria to communicate with and inhibit the growth of closely related neighboring bacteria in a contact-dependent fashion. Neutralizes the toxic activity of cognate toxin CdiA-NC101 (the C-terminal 154 residue CT fragment). Does not inhibit toxic activity of CdiA from other toxin-immunity modules or strains of E.coli. Mediates dimerization of the ternary CdiA-CT-NC101, CdiI-NC101 and EF-Tu complex; both CdiI molecules contact both EF-Tu molecules. The chain is Immunity protein CdiI from Escherichia coli (strain NC101).